Consider the following 454-residue polypeptide: Histidine--tRNA ligase (454 aa).

It belongs to the class-II aminoacyl-tRNA synthetase family. As to quaternary structure, homodimer.

It is found in the cytoplasm. It catalyses the reaction tRNA(His) + L-histidine + ATP = L-histidyl-tRNA(His) + AMP + diphosphate + H(+). The polypeptide is Histidine--tRNA ligase (Bacteroides fragilis (strain YCH46)).